The sequence spans 756 residues: Protein psiP (756 aa).

Positions 1 to 23 are cleaved as a signal peptide; sequence MFIQRTFLKVLTLLSIVTVLVHG. Topologically, residues 24–692 are extracellular; the sequence is QTQPKDKITL…NCNTGAVVST (669 aa). Asparagine 82 carries an N-linked (GlcNAc...) asparagine glycan. In terms of domain architecture, PA14 spans 126–281; the sequence is LNWNGEAYEY…VDYCGVCEGD (156 aa). Asparagine 359, asparagine 483, asparagine 564, and asparagine 663 each carry an N-linked (GlcNAc...) asparagine glycan. A helical transmembrane segment spans residues 693–713; the sequence is AVIAGSTVAGAVALGIFLYGG. Over 714 to 756 the chain is Cytoplasmic; that stretch reads KKGYDYWKDSRNISMGSSNSNPLYEEQQTGRGVNPMYDDPAAN. Residues 730-744 show a composition bias toward polar residues; that stretch reads SSNSNPLYEEQQTGR. The tract at residues 730-756 is disordered; the sequence is SSNSNPLYEEQQTGRGVNPMYDDPAAN.

The protein belongs to the prespore-cell-inducing factor family.

It is found in the membrane. This is Protein psiP (psiP) from Dictyostelium discoideum (Social amoeba).